Reading from the N-terminus, the 1375-residue chain is DNA-directed RNA polymerase subunit beta (1375 aa).

The protein belongs to the RNA polymerase beta chain family. In terms of assembly, the RNAP catalytic core consists of 2 alpha, 1 beta, 1 beta' and 1 omega subunit. When a sigma factor is associated with the core the holoenzyme is formed, which can initiate transcription.

The enzyme catalyses RNA(n) + a ribonucleoside 5'-triphosphate = RNA(n+1) + diphosphate. In terms of biological role, DNA-dependent RNA polymerase catalyzes the transcription of DNA into RNA using the four ribonucleoside triphosphates as substrates. This is DNA-directed RNA polymerase subunit beta from Methylorubrum populi (strain ATCC BAA-705 / NCIMB 13946 / BJ001) (Methylobacterium populi).